The following is a 698-amino-acid chain: MEKYERIRVVGRGAFGIVHLCLRKADQKLVILKQIPVEQMTKEERQAAQNECQVLKLLNHPNVIEYYENFLEDKALMIAMEYAPGGTLAEFIQKRCNSLLEEETILHFFVQILLALHHVHTHLILHRDLKTQNILLDKHRMVVKIGDFGISKILSSKSKAYTVVGTPCYISPELCEGKPYNQKSDIWALGCVLYELASLKRAFEAANLPALVLKIMSGTFAPISDRYSPELRQLVLSLLSLEPAQRPPLSHIMAQPLCIRALLNIHTDVGSVRMRRAEKSLTPGPPIASGSTGSRATSARCRGVPRGPVRPAIPPPLSSVYAWGGGLSSPLRLPMLNTEVVQVAAGRTQKAGVTRSGRLILWEAPPLGAGGGTLLPGAVELPQPQFVSRFLEGQSGVTIKHVACGDLFTACLTDRGIIMTFGSGSNGCLGHGNLTDISQPTIVEALLGYEMVQVACGASHVLALSTDGELFAWGRGDGGRLGLGTRESHNCPQQVPVAPGQEAQRVVCGIDSSMILTSPGRVLACGSNRFNKLGLDHLSLDEEPVPYQQVEEALSFTPLGSAPLDQEPLLCVDLGTAHSAAITASGDCYTFGSNQHGQLGTSSRRVSRAPCRVQGLEGIKMVMVACGDAFTVAVGAEGEVYSWGKGTRGRLGRRDEDAGLPRPVQLDETHPYMVTSVSCCHGNTLLAVRSVTDEPVPP.

The Protein kinase domain maps to 4–258 (YERIRVVGRG…LSHIMAQPLC (255 aa)). Residues 10 to 18 (VGRGAFGIV) and lysine 33 contribute to the ATP site. Catalysis depends on aspartate 128, which acts as the Proton acceptor. Threonine 162 carries the post-translational modification Phosphothreonine; by autocatalysis. Residues 278-309 (EKSLTPGPPIASGSTGSRATSARCRGVPRGPV) are disordered. Residues 288 to 309 (ASGSTGSRATSARCRGVPRGPV) are compositionally biased toward low complexity. RCC1 repeat units follow at residues 416–467 (GIIM…LSTD), 468–519 (GELF…LTSP), 520–585 (GRVL…ITAS), 586–637 (GDCY…VGAE), and 638–690 (GEVY…AVRS).

This sequence belongs to the protein kinase superfamily. NEK Ser/Thr protein kinase family. NIMA subfamily. In terms of assembly, interacts with PKD2; may regulate PKD2 targeting to the cilium. Interacts with ANKS6. Component of a complex containing at least ANKS6, INVS, NEK8 and NPHP3. ANKS6 may organize complex assembly by linking INVS and NPHP3 to NEK8 and INVS may target the complex to the proximal ciliary axoneme. Interacts with ANKS3. Mg(2+) serves as cofactor. As to expression, kidney, liver, and testis.

It localises to the cytoplasm. The protein resides in the cytoskeleton. Its subcellular location is the cell projection. It is found in the cilium. The protein localises to the microtubule organizing center. It localises to the centrosome. The protein resides in the cilium axoneme. It carries out the reaction L-seryl-[protein] + ATP = O-phospho-L-seryl-[protein] + ADP + H(+). The enzyme catalyses L-threonyl-[protein] + ATP = O-phospho-L-threonyl-[protein] + ADP + H(+). In terms of biological role, required for renal tubular integrity. May regulate local cytoskeletal structure in kidney tubule epithelial cells. May regulate ciliary biogenesis through targeting of proteins to the cilia. Plays a role in organogenesis and is involved in the regulation of the Hippo signaling pathway. This Mus musculus (Mouse) protein is Serine/threonine-protein kinase Nek8 (Nek8).